The sequence spans 267 residues: tRNA-cytidine(32) 2-sulfurtransferase 1 (267 aa).

A PP-loop motif motif is present at residues Ser42–Ser47. The [4Fe-4S] cluster site is built by Cys117, Cys120, and Cys208.

Belongs to the TtcA family. In terms of assembly, homodimer. Mg(2+) serves as cofactor. The cofactor is [4Fe-4S] cluster.

The protein localises to the cytoplasm. The catalysed reaction is cytidine(32) in tRNA + S-sulfanyl-L-cysteinyl-[cysteine desulfurase] + AH2 + ATP = 2-thiocytidine(32) in tRNA + L-cysteinyl-[cysteine desulfurase] + A + AMP + diphosphate + H(+). It functions in the pathway tRNA modification. Its function is as follows. Catalyzes the ATP-dependent 2-thiolation of cytidine in position 32 of tRNA, to form 2-thiocytidine (s(2)C32). The sulfur atoms are provided by the cysteine/cysteine desulfurase (IscS) system. The sequence is that of tRNA-cytidine(32) 2-sulfurtransferase 1 from Francisella tularensis subsp. novicida (strain U112).